The sequence spans 288 residues: Bifunctional protein FolD (288 aa).

NADP(+)-binding positions include 166–168 and I232; that span reads GAS.

This sequence belongs to the tetrahydrofolate dehydrogenase/cyclohydrolase family. In terms of assembly, homodimer.

It catalyses the reaction (6R)-5,10-methylene-5,6,7,8-tetrahydrofolate + NADP(+) = (6R)-5,10-methenyltetrahydrofolate + NADPH. The enzyme catalyses (6R)-5,10-methenyltetrahydrofolate + H2O = (6R)-10-formyltetrahydrofolate + H(+). It functions in the pathway one-carbon metabolism; tetrahydrofolate interconversion. Functionally, catalyzes the oxidation of 5,10-methylenetetrahydrofolate to 5,10-methenyltetrahydrofolate and then the hydrolysis of 5,10-methenyltetrahydrofolate to 10-formyltetrahydrofolate. The protein is Bifunctional protein FolD of Cronobacter sakazakii (strain ATCC BAA-894) (Enterobacter sakazakii).